A 143-amino-acid chain; its full sequence is UPF0292 protein Mbar_A0484 (143 aa).

The Toprim domain occupies 28 to 109 (GAIIIVEGKR…KPELEIRNKL (82 aa)). Mg(2+) is bound by residues E34, D78, and D80.

It belongs to the UPF0292 family. Mg(2+) serves as cofactor.

This is UPF0292 protein Mbar_A0484 from Methanosarcina barkeri (strain Fusaro / DSM 804).